Consider the following 258-residue polypeptide: Global transcriptional regulator CodY (258 aa).

Residues 1–156 (MSSLLDKTRM…SATIIGLEIL (156 aa)) are GAF domain. Residues 204–223 (ASKIADKVGITRSVIVNALR) constitute a DNA-binding region (H-T-H motif).

This sequence belongs to the CodY family.

It is found in the cytoplasm. Its function is as follows. DNA-binding global transcriptional regulator which is involved in the adaptive response to starvation and acts by directly or indirectly controlling the expression of numerous genes in response to nutrient availability. During rapid exponential growth, CodY is highly active and represses genes whose products allow adaptation to nutrient depletion. In Clostridium botulinum (strain ATCC 19397 / Type A), this protein is Global transcriptional regulator CodY.